The sequence spans 286 residues: Probable transport system permease protein NifC (286 aa).

The next 6 helical transmembrane spans lie at 34 to 54 (LFLALTAIYFVMLIFPIISMI), 75 to 95 (IILSFVTSLIALIFTFIIGTP), 114 to 134 (IFVEIPVVLPPAVAGIALLLA), 152 to 172 (VIFTSTAVIIAQFFVSSALYV), 216 to 236 (GLILAWIRSLGEFGATLMFAG), and 257 to 277 (IKMATAFATILYIMTFVLLLL). Residues 75-278 (IILSFVTSLI…IMTFVLLLLV (204 aa)) form the ABC transmembrane type-1 domain.

It belongs to the binding-protein-dependent transport system permease family. CysTW subfamily.

It localises to the cell membrane. May be involved in molybdenum transport. The sequence is that of Probable transport system permease protein NifC (nifC) from Clostridium pasteurianum.